The chain runs to 88 residues: Small ribosomal subunit protein bS16 (88 aa).

Belongs to the bacterial ribosomal protein bS16 family.

This chain is Small ribosomal subunit protein bS16, found in Sorangium cellulosum (strain So ce56) (Polyangium cellulosum (strain So ce56)).